Here is a 1203-residue protein sequence, read N- to C-terminus: ATP-dependent helicase/nuclease subunit A (1203 aa).

Positions 4 to 472 constitute a UvrD-like helicase ATP-binding domain; sequence VKLTPEQNEA…IRLKENFRSR (469 aa). Residue 25–32 participates in ATP binding; it reads ASAGSGKT. The UvrD-like helicase C-terminal domain maps to 503-785; it reads VQGNITDYPV…RVMTFHKSKG (283 aa).

Belongs to the helicase family. AddA subfamily. In terms of assembly, heterodimer of AddA and AddB/RexB. The cofactor is Mg(2+).

The enzyme catalyses Couples ATP hydrolysis with the unwinding of duplex DNA by translocating in the 3'-5' direction.. The catalysed reaction is ATP + H2O = ADP + phosphate + H(+). In terms of biological role, the heterodimer acts as both an ATP-dependent DNA helicase and an ATP-dependent, dual-direction single-stranded exonuclease. Recognizes the chi site generating a DNA molecule suitable for the initiation of homologous recombination. The AddA nuclease domain is required for chi fragment generation; this subunit has the helicase and 3' -&gt; 5' nuclease activities. The sequence is that of ATP-dependent helicase/nuclease subunit A from Lactococcus lactis subsp. lactis (strain IL1403) (Streptococcus lactis).